A 177-amino-acid chain; its full sequence is N-acetylmuramoyl-L-alanine amidase A (177 aa).

The 136-residue stretch at 23-158 folds into the N-acetylmuramoyl-L-alanine amidase domain; that stretch reads QTSAVIMHTM…SGNENRYDPG (136 aa). A disulfide bridge links Cys114 with Cys121.

The protein localises to the secreted. It catalyses the reaction Hydrolyzes the link between N-acetylmuramoyl residues and L-amino acid residues in certain cell-wall glycopeptides.. Functionally, antibacterial activity against Gram-positive bacteria M.luteus, S.aureus, E.faecalis and P.acidilactici and Gram-negative bacterium E.coli. The polypeptide is N-acetylmuramoyl-L-alanine amidase A (cwhA) (Achromobacter lyticus).